A 324-amino-acid chain; its full sequence is Glyoxylate/hydroxypyruvate reductase B (324 aa).

Residues R237 and E266 contribute to the active site. The Proton donor role is filled by H285.

It belongs to the D-isomer specific 2-hydroxyacid dehydrogenase family. GhrB subfamily. In terms of assembly, homodimer.

The protein resides in the cytoplasm. It carries out the reaction glycolate + NADP(+) = glyoxylate + NADPH + H(+). The enzyme catalyses (R)-glycerate + NAD(+) = 3-hydroxypyruvate + NADH + H(+). The catalysed reaction is (R)-glycerate + NADP(+) = 3-hydroxypyruvate + NADPH + H(+). Functionally, catalyzes the NADPH-dependent reduction of glyoxylate and hydroxypyruvate into glycolate and glycerate, respectively. This chain is Glyoxylate/hydroxypyruvate reductase B, found in Escherichia coli O6:K15:H31 (strain 536 / UPEC).